The sequence spans 410 residues: Peptidase T (410 aa).

Histidine 79 contributes to the Zn(2+) binding site. Aspartate 81 is an active-site residue. Position 142 (aspartate 142) interacts with Zn(2+). Glutamate 176 serves as the catalytic Proton acceptor. Residues glutamate 177, aspartate 199, and histidine 381 each contribute to the Zn(2+) site.

The protein belongs to the peptidase M20B family. Requires Zn(2+) as cofactor.

Its subcellular location is the cytoplasm. It carries out the reaction Release of the N-terminal residue from a tripeptide.. Its function is as follows. Cleaves the N-terminal amino acid of tripeptides. The polypeptide is Peptidase T (Listeria monocytogenes serotype 4b (strain CLIP80459)).